We begin with the raw amino-acid sequence, 75 residues long: Probable pilin MJ0431 (75 aa).

Positions M1 to G15 are excised as a propeptide. Residues Q16–L24 carry the QXSXEXXXL motif.

The N-terminus is cleaved by the prepilin peptidase EppA, which recognizes the class III signal sequence.

The protein resides in the secreted. It localises to the cell surface. Its subcellular location is the fimbrium. The chain is Probable pilin MJ0431 from Methanocaldococcus jannaschii (strain ATCC 43067 / DSM 2661 / JAL-1 / JCM 10045 / NBRC 100440) (Methanococcus jannaschii).